The primary structure comprises 550 residues: Membrane protein of ER body 2 (550 aa).

The segment at 46–199 (EFRSKAAATA…SSDSEEKSNL (154 aa)) is disordered. 2 stretches are compositionally biased toward low complexity: residues 80-105 (SVSESTSSLFSDSDPIVLESTVSETG) and 112-121 (TGSNEENGNN). Polar residues predominate over residues 122–132 (WLESSSTNLPN). The stretch at 134-165 (ENKRQRNGEDCEIEEEEENNERSLSDSEEKSN) forms a coiled coil. Acidic residues predominate over residues 143–152 (DCEIEEEEEN). Composition is skewed to basic and acidic residues over residues 153 to 166 (NERSLSDSEEKSNL) and 185 to 198 (KNERSSSDSEEKSN). A run of 4 helical transmembrane segments spans residues 374–394 (STMNILALAVANLAGGLIVLA), 425–445 (ILVAVMSYIFFGLIPPLVYAF), 458–478 (ISVFLGSLVCVILLGSIKVYV), and 500–520 (SIVVASCGISYVVGDIMGEYI). Residues 393-418 (LAQNFQDLRNSSDQEKDRYEELLGRR) adopt a coiled-coil conformation.

Belongs to the CCC1 family. In terms of assembly, interacts directly or indirectly with NAI2.

The protein resides in the endoplasmic reticulum membrane. Functionally, may sequester excess cytosolic iron and manganese into endoplasmic reticulum to reduce metal ion toxicity. Not essential for the accumulation of ER body components, including PYK10. This Arabidopsis thaliana (Mouse-ear cress) protein is Membrane protein of ER body 2 (MEB2).